We begin with the raw amino-acid sequence, 293 residues long: 4-diphosphocytidyl-2-C-methyl-D-erythritol kinase (293 aa).

K16 is an active-site residue. An ATP-binding site is contributed by 99 to 109 (PMGAGLGGGSS). The active site involves D141.

This sequence belongs to the GHMP kinase family. IspE subfamily.

The enzyme catalyses 4-CDP-2-C-methyl-D-erythritol + ATP = 4-CDP-2-C-methyl-D-erythritol 2-phosphate + ADP + H(+). It functions in the pathway isoprenoid biosynthesis; isopentenyl diphosphate biosynthesis via DXP pathway; isopentenyl diphosphate from 1-deoxy-D-xylulose 5-phosphate: step 3/6. In terms of biological role, catalyzes the phosphorylation of the position 2 hydroxy group of 4-diphosphocytidyl-2C-methyl-D-erythritol. The chain is 4-diphosphocytidyl-2-C-methyl-D-erythritol kinase from Burkholderia orbicola (strain MC0-3).